Consider the following 235-residue polypeptide: MAQADPADRDRLIVALDVPSVDAAKAMIDKLGDSVGFYKIGYQLAYAGGLALVPQLVDAGKKVFVDLKLHDIGNTVARGVESLTALGATFLTVHAYPQTMRAAVEARGTSGMKILAVTVLTSYDDADLTDAGYALGVRDLVEARARQALAIGVDGLVCSPEEAAHLRGIIGPRMALVTPGIRPAGSAAGDQKRIMTPARAIAAGASHLVVGRPVMEAADPKQAAEAIVAEIAQAK.

Residues Asp17, Lys39, 66–75 (DLKLHDIGNT), Thr121, Arg182, Gln191, Gly211, and Arg212 each bind substrate. The Proton donor role is filled by Lys68.

The protein belongs to the OMP decarboxylase family. Type 1 subfamily. Homodimer.

The catalysed reaction is orotidine 5'-phosphate + H(+) = UMP + CO2. It functions in the pathway pyrimidine metabolism; UMP biosynthesis via de novo pathway; UMP from orotate: step 2/2. In terms of biological role, catalyzes the decarboxylation of orotidine 5'-monophosphate (OMP) to uridine 5'-monophosphate (UMP). The protein is Orotidine 5'-phosphate decarboxylase of Rhodopseudomonas palustris (strain HaA2).